A 351-amino-acid chain; its full sequence is Glycerol-3-phosphate dehydrogenase [NAD(P)+] (351 aa).

Residues Ser-12, Trp-13, His-33, and Lys-114 each contribute to the NADPH site. Sn-glycerol 3-phosphate contacts are provided by Lys-114, Gly-145, and Ser-147. Residue Ala-149 participates in NADPH binding. Lys-200, Asp-253, Ser-263, Arg-264, and Asn-265 together coordinate sn-glycerol 3-phosphate. The Proton acceptor role is filled by Lys-200. NADPH is bound at residue Arg-264. Val-288 and Glu-290 together coordinate NADPH.

It belongs to the NAD-dependent glycerol-3-phosphate dehydrogenase family.

Its subcellular location is the cytoplasm. The enzyme catalyses sn-glycerol 3-phosphate + NAD(+) = dihydroxyacetone phosphate + NADH + H(+). The catalysed reaction is sn-glycerol 3-phosphate + NADP(+) = dihydroxyacetone phosphate + NADPH + H(+). The protein operates within membrane lipid metabolism; glycerophospholipid metabolism. In terms of biological role, catalyzes the reduction of the glycolytic intermediate dihydroxyacetone phosphate (DHAP) to sn-glycerol 3-phosphate (G3P), the key precursor for phospholipid synthesis. The chain is Glycerol-3-phosphate dehydrogenase [NAD(P)+] from Lacticaseibacillus paracasei (strain ATCC 334 / BCRC 17002 / CCUG 31169 / CIP 107868 / KCTC 3260 / NRRL B-441) (Lactobacillus paracasei).